A 461-amino-acid polypeptide reads, in one-letter code: L-seryl-tRNA(Sec) selenium transferase (461 aa).

The residue at position 294 (lysine 294) is an N6-(pyridoxal phosphate)lysine.

The protein belongs to the SelA family. The cofactor is pyridoxal 5'-phosphate.

The protein localises to the cytoplasm. It carries out the reaction L-seryl-tRNA(Sec) + selenophosphate + H(+) = L-selenocysteinyl-tRNA(Sec) + phosphate. It participates in aminoacyl-tRNA biosynthesis; selenocysteinyl-tRNA(Sec) biosynthesis; selenocysteinyl-tRNA(Sec) from L-seryl-tRNA(Sec) (bacterial route): step 1/1. Functionally, converts seryl-tRNA(Sec) to selenocysteinyl-tRNA(Sec) required for selenoprotein biosynthesis. The polypeptide is L-seryl-tRNA(Sec) selenium transferase (Haemophilus influenzae (strain ATCC 51907 / DSM 11121 / KW20 / Rd)).